The following is a 262-amino-acid chain: Aminoglycoside (3'') (9) adenylyltransferase (262 aa).

It catalyses the reaction streptomycin + ATP = 3''-O-adenylylstreptomycin + diphosphate. The enzyme catalyses spectinomycin + ATP = 9-O-adenylylspectinomycin + diphosphate. Its function is as follows. Mediates bacterial resistance to the antibiotics streptomycin and spectinomycin. The protein is Aminoglycoside (3'') (9) adenylyltransferase of Shigella flexneri.